A 92-amino-acid chain; its full sequence is Small ribosomal subunit protein uS19c (92 aa).

Belongs to the universal ribosomal protein uS19 family.

It is found in the plastid. The protein resides in the chloroplast. Functionally, protein S19 forms a complex with S13 that binds strongly to the 16S ribosomal RNA. The protein is Small ribosomal subunit protein uS19c of Oltmannsiellopsis viridis (Marine flagellate).